The chain runs to 827 residues: Cytosolic Fe-S cluster assembly factor NAR1 (827 aa).

Cys22 contributes to the [4Fe-4S] cluster binding site. The segment at 57 to 77 (AYYESSTPPSSSLSAADSRPR) is disordered. Low complexity predominate over residues 61–73 (SSTPPSSSLSAAD). Residues Cys92, Cys95, and Cys98 each contribute to the [4Fe-4S] cluster site. Residues 209–231 (RENARKRAKLSNAPADDDDRLHP) form a disordered region. Cys246, Cys307, Cys591, and Cys595 together coordinate [4Fe-4S] cluster. 2 disordered regions span residues 599 to 637 (GGQI…WAAD) and 709 to 739 (DQGG…NAKS). Polar residues-rich tracts occupy residues 604 to 621 (PPTQ…TVDN) and 713 to 738 (ANDS…SNAK).

It belongs to the NARF family.

Its function is as follows. Component of the cytosolic Fe/S protein assembly machinery. Required for maturation of extramitochondrial Fe/S proteins. May play a role in the transfer of pre-assembled Fe/S clusters to target apoproteins. The polypeptide is Cytosolic Fe-S cluster assembly factor NAR1 (NAR1) (Mycosarcoma maydis (Corn smut fungus)).